Consider the following 425-residue polypeptide: MTAIIDIFAREILDSRGNPTVEVDVTLEDGTMGRAAVPSGASTGAHEAVEKRDGDKARYLGKGVLEAVAAVNGEIAENLIGEDATEQVAIDRMMIELDGTPNKGRLGANAILGVSLAVAKAAAEACSQPLYRYVGGAGARVLPVPMMNIINGGEHADNPIDIQEFMIMPVAAENIREAVRMGSEVFHTLKKELSSAGLATGVGDEGGFAPNLSSTRDALDFILKAIEKAGYQPGDDIMLALDCASTEYFKGGKYEMAGEGKSLSPAENVAYLEALCNDYPILSIEDGCAEDDWDGWKLLTDTLGGRVQLVGDDLFVTNPARLAEGIAKGCGNSLLVKVNQIGTLTETLDAVRMADRARYTSVMSHRSGETEDATIADLAVATNCGQIKTGSLARSDRLAKYNQLIRIEEMLGATAEYAGKSILRG.

Q163 is a (2R)-2-phosphoglycerate binding site. The active-site Proton donor is the E205. Mg(2+) is bound by residues D242, E285, and D312. Positions 337, 366, 367, and 388 each coordinate (2R)-2-phosphoglycerate. The active-site Proton acceptor is the K337.

Belongs to the enolase family. The cofactor is Mg(2+).

It is found in the cytoplasm. It localises to the secreted. The protein localises to the cell surface. The enzyme catalyses (2R)-2-phosphoglycerate = phosphoenolpyruvate + H2O. Its pathway is carbohydrate degradation; glycolysis; pyruvate from D-glyceraldehyde 3-phosphate: step 4/5. Functionally, catalyzes the reversible conversion of 2-phosphoglycerate (2-PG) into phosphoenolpyruvate (PEP). It is essential for the degradation of carbohydrates via glycolysis. This Paracoccus denitrificans (strain Pd 1222) protein is Enolase.